A 125-amino-acid chain; its full sequence is Ribosome-binding factor A (125 aa).

This sequence belongs to the RbfA family. Monomer. Binds 30S ribosomal subunits, but not 50S ribosomal subunits or 70S ribosomes.

The protein resides in the cytoplasm. Functionally, one of several proteins that assist in the late maturation steps of the functional core of the 30S ribosomal subunit. Associates with free 30S ribosomal subunits (but not with 30S subunits that are part of 70S ribosomes or polysomes). Required for efficient processing of 16S rRNA. May interact with the 5'-terminal helix region of 16S rRNA. This is Ribosome-binding factor A from Kosmotoga olearia (strain ATCC BAA-1733 / DSM 21960 / TBF 19.5.1).